The primary structure comprises 647 residues: Acetyl-coenzyme A synthetase (647 aa).

CoA is bound by residues arginine 190 to lysine 193, threonine 310, and asparagine 334. Residues glycine 386 to proline 388, aspartate 410 to threonine 415, aspartate 499, and arginine 514 each bind ATP. Serine 522 contributes to the CoA binding site. Residue arginine 525 participates in ATP binding. Positions 536, 538, and 541 each coordinate Mg(2+). Arginine 583 is a CoA binding site. The residue at position 608 (lysine 608) is an N6-acetyllysine.

This sequence belongs to the ATP-dependent AMP-binding enzyme family. It depends on Mg(2+) as a cofactor. In terms of processing, acetylated. Deacetylation by the SIR2-homolog deacetylase activates the enzyme.

It carries out the reaction acetate + ATP + CoA = acetyl-CoA + AMP + diphosphate. Catalyzes the conversion of acetate into acetyl-CoA (AcCoA), an essential intermediate at the junction of anabolic and catabolic pathways. AcsA undergoes a two-step reaction. In the first half reaction, AcsA combines acetate with ATP to form acetyl-adenylate (AcAMP) intermediate. In the second half reaction, it can then transfer the acetyl group from AcAMP to the sulfhydryl group of CoA, forming the product AcCoA. The sequence is that of Acetyl-coenzyme A synthetase from Xanthomonas axonopodis pv. citri (strain 306).